A 201-amino-acid polypeptide reads, in one-letter code: Nucleoside triphosphate pyrophosphatase (201 aa).

The active-site Proton acceptor is Asp-77.

Belongs to the Maf family. Requires a divalent metal cation as cofactor.

It is found in the cytoplasm. It carries out the reaction a ribonucleoside 5'-triphosphate + H2O = a ribonucleoside 5'-phosphate + diphosphate + H(+). It catalyses the reaction a 2'-deoxyribonucleoside 5'-triphosphate + H2O = a 2'-deoxyribonucleoside 5'-phosphate + diphosphate + H(+). Its function is as follows. Nucleoside triphosphate pyrophosphatase. May have a dual role in cell division arrest and in preventing the incorporation of modified nucleotides into cellular nucleic acids. The protein is Nucleoside triphosphate pyrophosphatase of Rickettsia akari (strain Hartford).